We begin with the raw amino-acid sequence, 790 residues long: LPS-assembly protein LptD (790 aa).

The first 20 residues, 1–20 (MRMLRWLILSAFSVAGAVQA), serve as a signal peptide directing secretion.

Belongs to the LptD family. Component of the lipopolysaccharide transport and assembly complex. Interacts with LptE and LptA.

The protein resides in the cell outer membrane. Functionally, together with LptE, is involved in the assembly of lipopolysaccharide (LPS) at the surface of the outer membrane. The protein is LPS-assembly protein LptD of Bordetella parapertussis (strain 12822 / ATCC BAA-587 / NCTC 13253).